Consider the following 273-residue polypeptide: Dermonecrotic toxin LapSicTox-alphaIB1aiv (273 aa).

H5 is an active-site residue. Residues E25 and D27 each contribute to the Mg(2+) site. Catalysis depends on H41, which acts as the Nucleophile. Intrachain disulfides connect C45/C51 and C47/C190. D85 lines the Mg(2+) pocket. A glycan (N-linked (GlcNAc...) asparagine) is linked at N250.

It belongs to the arthropod phospholipase D family. Class II subfamily. It depends on Mg(2+) as a cofactor. In terms of tissue distribution, expressed by the venom gland.

The protein resides in the secreted. The catalysed reaction is an N-(acyl)-sphingosylphosphocholine = an N-(acyl)-sphingosyl-1,3-cyclic phosphate + choline. It catalyses the reaction an N-(acyl)-sphingosylphosphoethanolamine = an N-(acyl)-sphingosyl-1,3-cyclic phosphate + ethanolamine. It carries out the reaction a 1-acyl-sn-glycero-3-phosphocholine = a 1-acyl-sn-glycero-2,3-cyclic phosphate + choline. The enzyme catalyses a 1-acyl-sn-glycero-3-phosphoethanolamine = a 1-acyl-sn-glycero-2,3-cyclic phosphate + ethanolamine. Dermonecrotic toxins cleave the phosphodiester linkage between the phosphate and headgroup of certain phospholipids (sphingolipid and lysolipid substrates), forming an alcohol (often choline) and a cyclic phosphate. This toxin acts on sphingomyelin (SM). It may also act on ceramide phosphoethanolamine (CPE), lysophosphatidylcholine (LPC) and lysophosphatidylethanolamine (LPE), but not on lysophosphatidylserine (LPS), and lysophosphatidylglycerol (LPG). It acts by transphosphatidylation, releasing exclusively cyclic phosphate products as second products. Induces dermonecrosis, hemolysis, increased vascular permeability, edema, inflammatory response, and platelet aggregation. This Loxosceles apachea (Apache recluse spider) protein is Dermonecrotic toxin LapSicTox-alphaIB1aiv.